The primary structure comprises 298 residues: NADH-cytochrome b5 reductase 1 (298 aa).

Residues 14 to 34 (VILAGAYLIDPSALPFVAAGV) traverse the membrane as a helical segment. Residues 56–159 (KEYRKFKLVD…RGPKGQFSYT (104 aa)) form the FAD-binding FR-type domain. FAD is bound by residues 139–154 (SELSIGDSINARGPKG) and 165–197 (AIGMIAGGTGLTPMLQIIRAIVKNPEDKTQVNF).

The protein belongs to the flavoprotein pyridine nucleotide cytochrome reductase family. Monomer. Component of the 2-(3-amino-3-carboxypropyl)histidine synthase complex composed of DPH1, DPH2, DPH3 and a NADH-dependent reductase, predominantly CBR1. It depends on FAD as a cofactor.

It is found in the mitochondrion outer membrane. The catalysed reaction is 2 Fe(III)-[cytochrome b5] + NADH = 2 Fe(II)-[cytochrome b5] + NAD(+) + H(+). It carries out the reaction 2 Fe(3+)-[Dph3] + NADH = 2 Fe(2+)-[Dph3] + NAD(+) + H(+). The protein operates within protein modification; peptidyl-diphthamide biosynthesis. In terms of biological role, NADH-dependent reductase for DPH3 and cytochrome b5. Required for the first step of diphthamide biosynthesis, a post-translational modification of histidine which occurs in elongation factor 2. DPH1 and DPH2 transfer a 3-amino-3-carboxypropyl (ACP) group from S-adenosyl-L-methionine (SAM) to a histidine residue, the reaction is assisted by a reduction system comprising DPH3 and a NADH-dependent reductase, predominantly CBR1. By reducing DPH3, also involved in the formation of the tRNA wobble base modification mcm5s 2U (5-methoxycarbonylmethyl-2-thiouridine), mediated by the elongator complex. The cytochrome b5/NADH cytochrome b5 reductase electron transfer system supports the catalytic activity of several sterol biosynthetic enzymes. The sequence is that of NADH-cytochrome b5 reductase 1 (CBR1) from Mortierella alpina (Oleaginous fungus).